The sequence spans 407 residues: Nicotinate phosphoribosyltransferase (407 aa).

The residue at position 224 (H224) is a Phosphohistidine; by autocatalysis.

This sequence belongs to the NAPRTase family. Transiently phosphorylated on a His residue during the reaction cycle. Phosphorylation strongly increases the affinity for substrates and increases the rate of nicotinate D-ribonucleotide production. Dephosphorylation regenerates the low-affinity form of the enzyme, leading to product release.

The enzyme catalyses nicotinate + 5-phospho-alpha-D-ribose 1-diphosphate + ATP + H2O = nicotinate beta-D-ribonucleotide + ADP + phosphate + diphosphate. It participates in cofactor biosynthesis; NAD(+) biosynthesis; nicotinate D-ribonucleotide from nicotinate: step 1/1. Functionally, catalyzes the synthesis of beta-nicotinate D-ribonucleotide from nicotinate and 5-phospho-D-ribose 1-phosphate at the expense of ATP. The sequence is that of Nicotinate phosphoribosyltransferase from Pseudomonas savastanoi pv. phaseolicola (strain 1448A / Race 6) (Pseudomonas syringae pv. phaseolicola (strain 1448A / Race 6)).